The following is a 148-amino-acid chain: Lysozyme C (148 aa).

A signal peptide spans 1 to 18 (MKAVIILGLVLLSVTVQG). Positions 19-148 (KIFERCELAR…VSQYVQGCGV (130 aa)) constitute a C-type lysozyme domain. Intrachain disulfides connect cysteine 24–cysteine 146, cysteine 48–cysteine 134, cysteine 83–cysteine 99, and cysteine 95–cysteine 113. Catalysis depends on residues glutamate 53 and aspartate 71.

The protein belongs to the glycosyl hydrolase 22 family. As to quaternary structure, monomer.

The catalysed reaction is Hydrolysis of (1-&gt;4)-beta-linkages between N-acetylmuramic acid and N-acetyl-D-glucosamine residues in a peptidoglycan and between N-acetyl-D-glucosamine residues in chitodextrins.. Its function is as follows. Lysozymes have primarily a bacteriolytic function; those in tissues and body fluids are associated with the monocyte-macrophage system and enhance the activity of immunoagents. The protein is Lysozyme C (LYZ) of Allenopithecus nigroviridis (Allen's swamp monkey).